The chain runs to 690 residues: F-box/LRR-repeat protein 5 (690 aa).

Positions Met1–Cys159 are hemerythrin-like. Fe(3+) is bound by residues His15, His57, Glu58, Glu61, His80, His126, and Glu130. Residues Ser202–Leu248 enclose the F-box domain. LRR repeat units lie at residues Ser340–Thr364, Gln365–Gly392, Cys393–Phe418, Val478–Glu507, Thr575–Gly606, Cys607–Gly634, and Cys635–Tyr660. Cys661, Cys675, Cys685, and Cys686 together coordinate [2Fe-2S] cluster.

Part of a SCF (SKP1-cullin-F-box) protein ligase complex. Interacts with ACO1/IRP1, IREB2/IRP2; the interaction depends on the [2Fe-2S] cluster. Interacts with DCTN1/p150-glued. [2Fe-2S] cluster serves as cofactor. Post-translationally, polybiquitinated upon iron and oxygen depletion, leading to its degradation by the proteasome. Ubiquitination is regulated by the hemerythrin-like region that acts as an oxygen and iron sensor. Undergoes constitutive ubiquitin-dependent degradation at the steady state by HERC2. In terms of tissue distribution, ubiquitously expressed. Highly expressed in early embryogenesis with expression decreasing as the embryo progresses through development (E11 and E15).

The protein resides in the cytoplasm. The protein localises to the perinuclear region. It localises to the nucleus. The protein operates within protein modification; protein ubiquitination. Its activity is regulated as follows. An iron-sulfur cluster promotes IRP2 polyubiquitination and degradation in response to both iron and oxygen concentrations. Component of some SCF (SKP1-cullin-F-box) protein ligase complex that plays a central role in iron homeostasis by promoting the ubiquitination and subsequent degradation of IREB2/IRP2. The C-terminal domain of FBXL5 contains a redox-sensitive [2Fe-2S] cluster that, upon oxidation, promotes binding to IRP2 to effect its oxygen-dependent degradation. Under iron deficiency conditions, the N-terminal hemerythrin-like (Hr) region, which contains a diiron metal center, cannot bind iron and undergoes conformational changes that destabilize the FBXL5 protein and cause its ubiquitination and degradation. When intracellular iron levels start rising, the Hr region is stabilized. Additional increases in iron levels facilitate the assembly and incorporation of a redox active [2Fe-2S] cluster in the C-terminal domain. Only when oxygen level is high enough to maintain the cluster in its oxidized state can FBXL5 recruit IRP2 as a substrate for polyubiquination and degradation. Promotes ubiquitination and subsequent degradation of the dynactin complex component DCTN1. Within the nucleus, promotes the ubiquitination of SNAI1; preventing its interaction with DNA and promoting its degradation. Negatively regulates DNA damage response by mediating the ubiquitin-proteasome degradation of the DNA repair protein NABP2. The polypeptide is F-box/LRR-repeat protein 5 (Fbxl5) (Mus musculus (Mouse)).